The following is an 83-amino-acid chain: Translation initiation factor IF-1 (83 aa).

An S1-like domain is found at 1-72 (MAKEESIEMQ…TRGRIVYREA (72 aa)).

It belongs to the IF-1 family. As to quaternary structure, component of the 30S ribosomal translation pre-initiation complex which assembles on the 30S ribosome in the order IF-2 and IF-3, IF-1 and N-formylmethionyl-tRNA(fMet); mRNA recruitment can occur at any time during PIC assembly.

Its subcellular location is the cytoplasm. Its function is as follows. One of the essential components for the initiation of protein synthesis. Stabilizes the binding of IF-2 and IF-3 on the 30S subunit to which N-formylmethionyl-tRNA(fMet) subsequently binds. Helps modulate mRNA selection, yielding the 30S pre-initiation complex (PIC). Upon addition of the 50S ribosomal subunit IF-1, IF-2 and IF-3 are released leaving the mature 70S translation initiation complex. In Coxiella burnetii (strain Dugway 5J108-111), this protein is Translation initiation factor IF-1.